The following is a 211-amino-acid chain: Thymidylate kinase (211 aa).

10–17 (GVEGCGKT) lines the ATP pocket.

It belongs to the thymidylate kinase family.

It carries out the reaction dTMP + ATP = dTDP + ADP. Its function is as follows. Phosphorylation of dTMP to form dTDP in both de novo and salvage pathways of dTTP synthesis. The protein is Thymidylate kinase of Nostoc sp. (strain PCC 7120 / SAG 25.82 / UTEX 2576).